The following is a 489-amino-acid chain: Cysteine--tRNA ligase (489 aa).

A Zn(2+)-binding site is contributed by Cys-29. Positions Ile-31 to His-41 match the 'HIGH' region motif. Residues Cys-209, His-234, and Glu-238 each coordinate Zn(2+). Residues Lys-266 to Ser-270 carry the 'KMSKS' region motif. Lys-269 contributes to the ATP binding site.

The protein belongs to the class-I aminoacyl-tRNA synthetase family. Monomer. It depends on Zn(2+) as a cofactor.

Its subcellular location is the cytoplasm. It catalyses the reaction tRNA(Cys) + L-cysteine + ATP = L-cysteinyl-tRNA(Cys) + AMP + diphosphate. In Desulfotalea psychrophila (strain LSv54 / DSM 12343), this protein is Cysteine--tRNA ligase.